Here is a 423-residue protein sequence, read N- to C-terminus: MDKIIVKGGNTRLSGEVVIEGAKNAVLPLLAATILASEGQTTLTNVPILSDVYTMNNVVRGLDIAVDFNEENNTVVVDASGEILDQAPYEYVSKMRASIVVLGPILARNGHAKVSMPGGCTIGSRPIDLHLKGLEAMGAKIIQVGGDITATAEKLKGATIYMDFPSVGATQNLMMAATLADGVTTIENAAREPEIVDLAILLNEMGANVKGAGTEKLVIKGVKSLHGTQHAVIQDRIEAGTFMVAAAMTSGNVLIKDAIWEHNRPLISKLLEMGVDVKEEDRGIRVKSDVSKLKPVAVKTLPHPGFPTDMQAQFTALMAVVKGKSSISETVFENRFQHLEEMRRMGLHSEILRDTAMIHGGLPLQGARVMSTDLRASAALILTGMVAEGTTTVGKLTHLDRGYYKFHEKLAKLGAQISRVSEA.

Position 23-24 (23-24 (KN)) interacts with phosphoenolpyruvate. Arginine 96 lines the UDP-N-acetyl-alpha-D-glucosamine pocket. Cysteine 120 functions as the Proton donor in the catalytic mechanism. Position 120 is a 2-(S-cysteinyl)pyruvic acid O-phosphothioketal (cysteine 120). UDP-N-acetyl-alpha-D-glucosamine is bound by residues 125 to 129 (RPIDL), aspartate 309, and valine 331.

Belongs to the EPSP synthase family. MurA subfamily.

It localises to the cytoplasm. The enzyme catalyses phosphoenolpyruvate + UDP-N-acetyl-alpha-D-glucosamine = UDP-N-acetyl-3-O-(1-carboxyvinyl)-alpha-D-glucosamine + phosphate. Its pathway is cell wall biogenesis; peptidoglycan biosynthesis. Cell wall formation. Adds enolpyruvyl to UDP-N-acetylglucosamine. In Streptococcus thermophilus (strain ATCC BAA-250 / LMG 18311), this protein is UDP-N-acetylglucosamine 1-carboxyvinyltransferase 1.